Reading from the N-terminus, the 131-residue chain is Hydrogenase maturation factor HypA (131 aa).

His2 serves as a coordination point for Ni(2+). The Zn(2+) site is built by Cys74, Cys77, Cys91, and Cys94.

It belongs to the HypA/HybF family.

In terms of biological role, involved in the maturation of [NiFe] hydrogenases. Required for nickel insertion into the metal center of the hydrogenase. The chain is Hydrogenase maturation factor HypA from Streptomyces avermitilis (strain ATCC 31267 / DSM 46492 / JCM 5070 / NBRC 14893 / NCIMB 12804 / NRRL 8165 / MA-4680).